A 504-amino-acid chain; its full sequence is ATP synthase subunit beta (504 aa).

Position 181–188 (181–188 (GGAGVGKT)) interacts with ATP.

It belongs to the ATPase alpha/beta chains family. In terms of assembly, F-type ATPases have 2 components, CF(1) - the catalytic core - and CF(0) - the membrane proton channel. CF(1) has five subunits: alpha(3), beta(3), gamma(1), delta(1), epsilon(1). CF(0) has three main subunits: a(1), b(2) and c(9-12). The alpha and beta chains form an alternating ring which encloses part of the gamma chain. CF(1) is attached to CF(0) by a central stalk formed by the gamma and epsilon chains, while a peripheral stalk is formed by the delta and b chains.

It is found in the cell inner membrane. It carries out the reaction ATP + H2O + 4 H(+)(in) = ADP + phosphate + 5 H(+)(out). In terms of biological role, produces ATP from ADP in the presence of a proton gradient across the membrane. The catalytic sites are hosted primarily by the beta subunits. The protein is ATP synthase subunit beta of Ehrlichia ruminantium (strain Welgevonden).